The sequence spans 331 residues: tRNA U34 carboxymethyltransferase (331 aa).

Carboxy-S-adenosyl-L-methionine contacts are provided by residues lysine 91, tryptophan 105, lysine 110, glycine 130, 152–154, 181–182, methionine 196, tyrosine 200, and arginine 315; these read DPS and IE.

This sequence belongs to the class I-like SAM-binding methyltransferase superfamily. CmoB family. Homotetramer.

It carries out the reaction carboxy-S-adenosyl-L-methionine + 5-hydroxyuridine(34) in tRNA = 5-carboxymethoxyuridine(34) in tRNA + S-adenosyl-L-homocysteine + H(+). Its function is as follows. Catalyzes carboxymethyl transfer from carboxy-S-adenosyl-L-methionine (Cx-SAM) to 5-hydroxyuridine (ho5U) to form 5-carboxymethoxyuridine (cmo5U) at position 34 in tRNAs. This Shewanella baltica (strain OS185) protein is tRNA U34 carboxymethyltransferase.